Here is a 355-residue protein sequence, read N- to C-terminus: Guanine nucleotide-binding protein G(q) subunit alpha (355 aa).

Cys3 carries the S-palmitoyl cysteine lipid modification. Residues 32-355 (KEIKLLLLGT…QHITEVVPGL (324 aa)) enclose the G-alpha domain. The G1 motif stretch occupies residues 35 to 48 (KLLLLGTGESGKST). Residues 40-47 (GTGESGKS), 174-180 (LRVRVPT), 199-203 (DVGGQ), 269-272 (NKKD), and Ala326 contribute to the GTP site. Mg(2+) is bound by residues Ser47 and Thr180. The G2 motif stretch occupies residues 172 to 180 (DVLRVRVPT). The G3 motif stretch occupies residues 195–204 (FKMVDVGGQR). The tract at residues 265–272 (ILFLNKKD) is G4 motif. Positions 324-329 (TCATDT) are G5 motif.

It belongs to the G-alpha family. G(q) subfamily. As to quaternary structure, g proteins are composed of 3 units; alpha, beta and gamma. The alpha chain contains the guanine nucleotide binding site.

In terms of biological role, guanine nucleotide-binding proteins (G proteins) are involved as modulators or transducers in various transmembrane signaling systems. The sequence is that of Guanine nucleotide-binding protein G(q) subunit alpha from Geodia cydonium (Sponge).